Reading from the N-terminus, the 201-residue chain is Proteinase inhibitor type-2 CEVI57 (201 aa).

An N-terminal signal peptide occupies residues 1–23 (MAVYKVSFLAHLLVLGMYLLVST). Tandem repeats lie at residues 27–83 (ANAC…DPKN), 84–143 (PNIC…IEPK), and 144–199 (GCTK…QSIS). Cystine bridges form between Cys-30/Cys-118, Cys-34/Cys-114, Cys-42/Cys-124, Cys-54/Cys-91, Cys-57/Cys-75, Cys-58/Cys-87, Cys-64/Cys-100, and Cys-117/Cys-135.

This sequence belongs to the protease inhibitor I20 (potato type II proteinase inhibitor) family.

The sequence is that of Proteinase inhibitor type-2 CEVI57 (CEVI57) from Solanum lycopersicum (Tomato).